The following is a 466-amino-acid chain: Serine/threonine-protein kinase SSN3 (466 aa).

The 365-residue stretch at 32–396 (YKILGFISSG…ARDALRHPWF (365 aa)) folds into the Protein kinase domain. 38 to 46 (ISSGTYGRV) is an ATP binding site. The segment at 58–105 (ASAKSALPSSTRAALSLPKDKLPSPSFTEDSDPLNNPEMCMRPGDRPA) is disordered. Lys114 contributes to the ATP binding site. Residue Asp216 is the Proton acceptor of the active site. A disordered region spans residues 421-466 (THEDNGDAKMGSLPQSMAGGRLPSSSNFRPASGNIVQPAARKKARI).

This sequence belongs to the protein kinase superfamily. CMGC Ser/Thr protein kinase family. CDC2/CDKX subfamily. Component of the SRB8-11 complex, a regulatory module of the Mediator complex. Mg(2+) is required as a cofactor.

It is found in the nucleus. It carries out the reaction L-seryl-[protein] + ATP = O-phospho-L-seryl-[protein] + ADP + H(+). The catalysed reaction is L-threonyl-[protein] + ATP = O-phospho-L-threonyl-[protein] + ADP + H(+). It catalyses the reaction [DNA-directed RNA polymerase] + ATP = phospho-[DNA-directed RNA polymerase] + ADP + H(+). In terms of biological role, component of the SRB8-11 complex. The SRB8-11 complex is a regulatory module of the Mediator complex which is itself involved in regulation of basal and activated RNA polymerase II-dependent transcription. The SRB8-11 complex may be involved in the transcriptional repression of a subset of genes regulated by Mediator. It may inhibit the association of the Mediator complex with RNA polymerase II to form the holoenzyme complex. The SRB8-11 complex phosphorylates the C-terminal domain (CTD) of the largest subunit of RNA polymerase II. The sequence is that of Serine/threonine-protein kinase SSN3 (SSN3) from Cryptococcus neoformans var. neoformans serotype D (strain B-3501A) (Filobasidiella neoformans).